The sequence spans 261 residues: Carnitinyl-CoA dehydratase (261 aa).

The active-site Nucleophile is Glu111. Glu131 (proton acceptor) is an active-site residue.

Belongs to the enoyl-CoA hydratase/isomerase family.

The enzyme catalyses (R)-carnitinyl-CoA = crotonobetainyl-CoA + H2O. It participates in amine and polyamine metabolism; carnitine metabolism. Its function is as follows. Catalyzes the reversible dehydration of L-carnitinyl-CoA to crotonobetainyl-CoA. This chain is Carnitinyl-CoA dehydratase, found in Salmonella paratyphi C (strain RKS4594).